The sequence spans 114 residues: As-peptide 126 (114 aa).

The N-terminal stretch at 1–22 is a signal peptide; sequence MSRALICSLALLAMLVISGTYA. Tandem repeats lie at residues 22–29, 30–37, 38–45, 46–53, 54–61, 62–69, 70–77, 78–85, and 86–93. The segment at 22-93 is 9 X 8 AA approximate tandem repeats of [AP]-[ILS]-[AP]-A-A-N-A-[DE]; the sequence is ASPAANAEAL…AEPLAAANAE (72 aa). Residues 23–104 constitute a propeptide that is removed on maturation; sequence SPAANAEALA…SAGPSPLAAA (82 aa). The span at 82 to 96 shows a compositional bias: low complexity; that stretch reads ANAEPLAAANAEPSA. The disordered stretch occupies residues 82–114; that stretch reads ANAEPLAAANAEPSAGPSPLAAAQDPPVVKMKG. The residue at position 105 (Gln-105) is a Pyrrolidone carboxylic acid. Position 113 is a lysine amide (Lys-113).

In terms of tissue distribution, expressed by the venom gland.

It is found in the secreted. This is As-peptide 126 from Anoplius samariensis (Solitary wasp).